The following is a 959-amino-acid chain: Alanine--tRNA ligase (959 aa).

At Ser389 the chain carries Phosphoserine. Zn(2+) is bound by residues His606, His610, Cys725, and His729.

It belongs to the class-II aminoacyl-tRNA synthetase family. In terms of assembly, monomer. Requires Zn(2+) as cofactor.

The protein resides in the mitochondrion. The protein localises to the cytoplasm. The catalysed reaction is tRNA(Ala) + L-alanine + ATP = L-alanyl-tRNA(Ala) + AMP + diphosphate. Its function is as follows. Catalyzes the attachment of alanine to tRNA(Ala) in a two-step reaction: alanine is first activated by ATP to form Ala-AMP and then transferred to the acceptor end of tRNA(Ala). Also edits incorrectly charged tRNA(Ala) via its editing domain. The chain is Alanine--tRNA ligase (ala1) from Schizosaccharomyces pombe (strain 972 / ATCC 24843) (Fission yeast).